A 486-amino-acid chain; its full sequence is Malonate-semialdehyde dehydrogenase 1 (486 aa).

NAD(+) is bound by residues phenylalanine 154, lysine 178, glutamate 181, arginine 182, and serine 231. The active-site Nucleophile is cysteine 286. Glutamate 386 serves as a coordination point for NAD(+).

The protein belongs to the aldehyde dehydrogenase family. IolA subfamily. In terms of assembly, homotetramer.

The enzyme catalyses 3-oxopropanoate + NAD(+) + CoA + H2O = hydrogencarbonate + acetyl-CoA + NADH + H(+). It carries out the reaction 2-methyl-3-oxopropanoate + NAD(+) + CoA + H2O = propanoyl-CoA + hydrogencarbonate + NADH + H(+). It participates in polyol metabolism; myo-inositol degradation into acetyl-CoA; acetyl-CoA from myo-inositol: step 7/7. Functionally, catalyzes the oxidation of malonate semialdehyde (MSA) and methylmalonate semialdehyde (MMSA) into acetyl-CoA and propanoyl-CoA, respectively. Is involved in a myo-inositol catabolic pathway. Bicarbonate, and not CO2, is the end-product of the enzymatic reaction. This chain is Malonate-semialdehyde dehydrogenase 1, found in Bacillus thuringiensis (strain Al Hakam).